The chain runs to 233 residues: 7-cyano-7-deazaguanine synthase (233 aa).

7-17 (LSGGLDSLVTS) is an ATP binding site. Zn(2+)-binding residues include C195, C206, C209, and C212.

This sequence belongs to the QueC family. Zn(2+) is required as a cofactor.

It catalyses the reaction 7-carboxy-7-deazaguanine + NH4(+) + ATP = 7-cyano-7-deazaguanine + ADP + phosphate + H2O + H(+). The protein operates within purine metabolism; 7-cyano-7-deazaguanine biosynthesis. Catalyzes the ATP-dependent conversion of 7-carboxy-7-deazaguanine (CDG) to 7-cyano-7-deazaguanine (preQ(0)). The protein is 7-cyano-7-deazaguanine synthase of Methanococcus vannielii (strain ATCC 35089 / DSM 1224 / JCM 13029 / OCM 148 / SB).